A 507-amino-acid polypeptide reads, in one-letter code: E3 ubiquitin-protein ligase TRIM31 (507 aa).

The segment at 16–56 (CPICMEILQDPVTIDCGHNFCLQCISQVGKTSEKIQCPLCK) adopts an RING-type zinc-finger fold. Residues 89–130 (KEDSRCQRHKEKLHYFCEQDGAFLCVVCRDSKDHKSHNVTLI) form a B box-type zinc finger. Zn(2+) is bound by residues cysteine 94, histidine 97, cysteine 116, and histidine 122. 2 coiled-coil regions span residues 176–241 (EKLK…LQSS) and 269–298 (EDLEKKCSEAKARHESIIKTLTELKDDMNA). The B30.2/SPRY domain occupies 315–507 (EKESWSLLQK…VACSHITLSP (193 aa)).

It belongs to the TRIM/RBCC family. As to quaternary structure, may form oligomers. Interacts with isoform p52shc of SHC1. Post-translationally, auto-ubiquitinated (in vitro). In terms of tissue distribution, highly expressed in the gastrointestrinal tract, with high expression in the small intestine, moderate in the large intestine and weak in the stomach and esophagus.

The protein localises to the cytoplasm. Its subcellular location is the mitochondrion. The enzyme catalyses S-ubiquitinyl-[E2 ubiquitin-conjugating enzyme]-L-cysteine + [acceptor protein]-L-lysine = [E2 ubiquitin-conjugating enzyme]-L-cysteine + N(6)-ubiquitinyl-[acceptor protein]-L-lysine.. The protein operates within protein modification; protein ubiquitination. Its function is as follows. E3 ubiquitin-protein ligase that acts as a regulator of antiviral immune response and inflammation by mediating ubiquitination of substrates. Acts as a regulator of innate immune defense against viruses by mediating 'Lys-63'-linked ubiquitination of MAVS, promoting MAVS polymerization and formation of three-stranded helical filaments on mitochondria. Acts as a negative regulator of the NLRP3 inflammasome by catalyzing 'Lys-48'-linked ubiquitination of NLRP3, leading to its degradation. Regulator of Src-induced anchorage independent cell growth. The sequence is that of E3 ubiquitin-protein ligase TRIM31 from Mus musculus (Mouse).